The sequence spans 1284 residues: ABC multidrug transporter atrC (1284 aa).

Basic and acidic residues predominate over residues 1 to 11 (MKSTAESKETP). Positions 1 to 24 (MKSTAESKETPSQDESTTSVPCTE) are disordered. 6 helical membrane passes run 55 to 75 (AVAILAACASGAGIALQNLIF), 99 to 119 (AAELALYFVYLGIARLVLSYT), 178 to 198 (IGLLFQGLAAFVTLSLSRLWC), 203 to 223 (TLICICIPVATIGTTGVVAAV), 282 to 302 (LLGLLFSAEYTIIYLGYGLAF), and 320 to 340 (IFTVLLSVVIASINLTLLAPY). Residues 55 to 346 (AVAILAACAS…LAPYSIEFSR (292 aa)) enclose the ABC transmembrane type-1 1 domain. The 246-residue stretch at 381–626 (VELENVTFSY…DGVYAGLVKI (246 aa)) folds into the ABC transporter 1 domain. N-linked (GlcNAc...) asparagine glycosylation is found at N385 and N401. 416-423 (GQSGSGKS) is a binding site for ATP. N-linked (GlcNAc...) asparagine glycosylation is found at N488 and N632. Helical transmembrane passes span 705-725 (LVVLLGCLGGCAMYPGQAILM) and 745-765 (FYASMLIVLAAGCLICYLAVG). Residues 705 to 992 (LVVLLGCLGG…LFQWSTSITK (288 aa)) form the ABC transmembrane type-1 2 domain. The N-linked (GlcNAc...) asparagine glycan is linked to N800. The next 4 membrane-spanning stretches (helical) occupy residues 824-844 (IALVVIAVLQVVTCGILAIAF), 846-866 (WKLGLVVVFGGIPPLVGAGMV), 931-951 (MICFGLTQCIEYWFQALGFWY), and 955-975 (LVSLGETSMYSFFVAFLSVFF). N-linked (GlcNAc...) asparagine glycosylation is present at N995. Residues 1027-1280 (IAMDNVRFSY…GGLYRRMCEA (254 aa)) form the ABC transporter 2 domain. ATP is bound at residue 1062-1069 (GSSGCGKS). The N-linked (GlcNAc...) asparagine glycan is linked to N1122.

The protein belongs to the ABC transporter superfamily. ABCB family. Multidrug resistance exporter (TC 3.A.1.201) subfamily.

It is found in the cell membrane. Its function is as follows. Pleiotropic ABC efflux transporter involved in the protection of the cells against a wide range of toxic compounds. The polypeptide is ABC multidrug transporter atrC (Emericella nidulans (Aspergillus nidulans)).